The chain runs to 969 residues: Endogenous retrovirus group K member 11 Pol protein (969 aa).

Residues 57–245 (LEKGHIEPSF…TPFHYLGMQI (189 aa)) form the Reverse transcriptase domain. The LPQG signature appears at 161–164 (LPQG). Positions 460–590 (LENALTVFTD…ADLLVSSALI (131 aa)) constitute an RNase H type-1 domain. Mg(2+) contacts are provided by Asp469, Glu497, Asp517, and Asp582. The Integrase-type zinc finger occupies 587–628 (SALIKAQELHALTHVNAAGLKNKFDVTWKQAKDIVQHCTQCQ). 4 residues coordinate Zn(2+): His596, His600, Cys624, and Cys627. Residues 642–803 (RGLCPNALWQ…TSAEQHLTGK (162 aa)) enclose the Integrase catalytic domain. A DNA-binding region (integrase-type) is located at residues 811 to 859 (KLIWWKDNKNKTWEIGKVITWGRGFACVSPGENQLPVWIPTRHLKFYNE).

Belongs to the beta type-B retroviral polymerase family. HERV class-II K(HML-2) pol subfamily.

The catalysed reaction is DNA(n) + a 2'-deoxyribonucleoside 5'-triphosphate = DNA(n+1) + diphosphate. It carries out the reaction Endonucleolytic cleavage to 5'-phosphomonoester.. Functionally, early post-infection, the reverse transcriptase converts the viral RNA genome into double-stranded viral DNA. The RNase H domain of the reverse transcriptase performs two functions. It degrades the RNA template and specifically removes the RNA primer from the RNA/DNA hybrid. Following nuclear import, the integrase catalyzes the insertion of the linear, double-stranded viral DNA into the host cell chromosome. Endogenous Pol proteins may have kept, lost or modified their original function during evolution. This Homo sapiens (Human) protein is Endogenous retrovirus group K member 11 Pol protein (ERVK-11).